The primary structure comprises 451 residues: Heat shock factor protein (451 aa).

A DNA-binding region spans residues 12 to 117; that stretch reads VPAFLAKLWT…LLENIKRKVN (106 aa). 2 disordered regions span residues 210 to 273 and 285 to 307; these read LNDS…LEAS and LTPS…PISP. Residues 232–246 are compositionally biased toward polar residues; the sequence is PSSTSYPVSGFTDSS.

The protein belongs to the HSF family. As to quaternary structure, homotrimer. Exhibits temperature-dependent phosphorylation.

The protein resides in the nucleus. In terms of biological role, DNA-binding protein that specifically binds heat shock promoter elements (HSE) and activates transcription. The polypeptide is Heat shock factor protein (hsf1) (Xenopus laevis (African clawed frog)).